Here is a 343-residue protein sequence, read N- to C-terminus: D-erythrose-4-phosphate dehydrogenase (343 aa).

12 to 13 contributes to the NAD(+) binding site; the sequence is RI. Residues 154-156, R200, 213-214, and R236 each bind substrate; these read SCT and TK. Catalysis depends on C155, which acts as the Nucleophile. N318 contacts NAD(+).

The protein belongs to the glyceraldehyde-3-phosphate dehydrogenase family. Epd subfamily. As to quaternary structure, homotetramer.

The protein localises to the cytoplasm. The catalysed reaction is D-erythrose 4-phosphate + NAD(+) + H2O = 4-phospho-D-erythronate + NADH + 2 H(+). It participates in cofactor biosynthesis; pyridoxine 5'-phosphate biosynthesis; pyridoxine 5'-phosphate from D-erythrose 4-phosphate: step 1/5. Catalyzes the NAD-dependent conversion of D-erythrose 4-phosphate to 4-phosphoerythronate. This chain is D-erythrose-4-phosphate dehydrogenase, found in Pseudoalteromonas translucida (strain TAC 125).